The primary structure comprises 151 residues: Large ribosomal subunit protein bL9 (151 aa).

This sequence belongs to the bacterial ribosomal protein bL9 family.

In terms of biological role, binds to the 23S rRNA. This Desulfosudis oleivorans (strain DSM 6200 / JCM 39069 / Hxd3) (Desulfococcus oleovorans) protein is Large ribosomal subunit protein bL9.